A 149-amino-acid polypeptide reads, in one-letter code: Large-conductance mechanosensitive channel (149 aa).

The next 2 membrane-spanning stretches (helical) occupy residues 14–34 and 85–105; these read VVDMAVGIIVGGAFGKLVNTL and GLFINAMISFIIMAFAVYLLV.

This sequence belongs to the MscL family. In terms of assembly, homopentamer.

The protein localises to the cell inner membrane. Functionally, channel that opens in response to stretch forces in the membrane lipid bilayer. May participate in the regulation of osmotic pressure changes within the cell. The protein is Large-conductance mechanosensitive channel of Chlorobium phaeovibrioides (strain DSM 265 / 1930) (Prosthecochloris vibrioformis (strain DSM 265)).